Here is a 790-residue protein sequence, read N- to C-terminus: Spermatogenesis-associated protein 20 (790 aa).

The span at 1-19 shows a compositional bias: basic residues; that stretch reads MSHHSSPPPKHKGEHKGHG. Positions 1 to 67 are disordered; that stretch reads MSHHSSPPPK…PPPAPPKTVN (67 aa). Serine 5 is subject to Phosphoserine. Positions 23-36 are enriched in basic and acidic residues; sequence GSERGSSSRDKDRS. A Phosphoserine modification is found at serine 653.

The protein resides in the secreted. Its function is as follows. May play a role in fertility regulation. The protein is Spermatogenesis-associated protein 20 (Spata20) of Mus musculus (Mouse).